The chain runs to 214 residues: Phosphatidylserine decarboxylase proenzyme (214 aa).

Ser-182 functions as the Schiff-base intermediate with substrate; via pyruvic acid in the catalytic mechanism. At Ser-182 the chain carries Pyruvic acid (Ser); by autocatalysis.

This sequence belongs to the phosphatidylserine decarboxylase family. PSD-A subfamily. As to quaternary structure, heterodimer of a large membrane-associated beta subunit and a small pyruvoyl-containing alpha subunit. Pyruvate serves as cofactor. In terms of processing, is synthesized initially as an inactive proenzyme. Formation of the active enzyme involves a self-maturation process in which the active site pyruvoyl group is generated from an internal serine residue via an autocatalytic post-translational modification. Two non-identical subunits are generated from the proenzyme in this reaction, and the pyruvate is formed at the N-terminus of the alpha chain, which is derived from the carboxyl end of the proenzyme. The post-translation cleavage follows an unusual pathway, termed non-hydrolytic serinolysis, in which the side chain hydroxyl group of the serine supplies its oxygen atom to form the C-terminus of the beta chain, while the remainder of the serine residue undergoes an oxidative deamination to produce ammonia and the pyruvoyl prosthetic group on the alpha chain.

It localises to the cell membrane. It carries out the reaction a 1,2-diacyl-sn-glycero-3-phospho-L-serine + H(+) = a 1,2-diacyl-sn-glycero-3-phosphoethanolamine + CO2. It functions in the pathway phospholipid metabolism; phosphatidylethanolamine biosynthesis; phosphatidylethanolamine from CDP-diacylglycerol: step 2/2. Catalyzes the formation of phosphatidylethanolamine (PtdEtn) from phosphatidylserine (PtdSer). The polypeptide is Phosphatidylserine decarboxylase proenzyme (Burkholderia multivorans (strain ATCC 17616 / 249)).